Reading from the N-terminus, the 641-residue chain is MIFLKNICKNIGENAILKNVSLSIEKGEFVAIIGQSGSGKTSLLNIIGTLDTPSSGTYVFDEYEVTKLNNDEKARLRREKIGFIFQRYNLLSLLSAKENVSLPAVYAGKKLQERSQNAKKLLNDLELAHKLDSKPNELSGGQQQRVSIARALMNGGELILADEPTGALDSKSGIMVLEILQKLNAQGHTIVLVTHDPKIAAQAKRVIEIKDGEILSDTKKEKAQEKLTLKTMSKEKKTLTLLKNQAFECFKIAYSSILAHKLRSILTMLGIIIGIASVVCVVALGLGSQAKVLESIARLGTNTIEIRPGRGFGDLRSGKTRLNFSDLETLRSLEYLEAVDAHSNTSGVATYTNISLSARAEGVGVNNFAIEGLRIDAGRILNNDDVKNSTNVAVLDFNAKKNLFPDEKSENILGRVVLFNSQPFKIIGVLQKDTDKPIEDNVVRLYIPYTTLMNKLTGDRNLREIIVKVKDDVSSTLAENAIIRILEIKRGQKDFFTFNSDTFKQAITANKRTTTILTACVAVIALIVGGIGVMNIMLVSVSERTREIGIRMAIGARREDIMMQFLIEAVMICTIGAILGVILSIFVIFAFNTLSTDFPMILNAYSVLLGLLSSMFIGVVFGFFPARNAANLNPISALSKE.

The region spanning 2–236 (IFLKNICKNI…LTLKTMSKEK (235 aa)) is the ABC transporter domain. 34-41 (GQSGSGKT) lines the ATP pocket. The next 4 membrane-spanning stretches (helical) occupy residues 265-285 (ILTM…VALG), 519-539 (ACVA…IMLV), 571-591 (MICT…IFAF), and 604-624 (AYSV…FGFF).

It belongs to the ABC transporter superfamily. Macrolide exporter (TC 3.A.1.122) family. Homodimer.

The protein resides in the cell inner membrane. Its function is as follows. Non-canonical ABC transporter that contains transmembrane domains (TMD), which form a pore in the inner membrane, and an ATP-binding domain (NBD), which is responsible for energy generation. Confers resistance against macrolides. The sequence is that of Macrolide export ATP-binding/permease protein MacB from Campylobacter jejuni subsp. jejuni serotype O:23/36 (strain 81-176).